A 277-amino-acid polypeptide reads, in one-letter code: MAMKGPGLFSDIGKRAKDLLTKDYTYDQKLTVSTVSSSGVGLTSTAVKKGGLYTLDVSSVYKYKSTLVDVKVDTESNISTTLTVFDVLPSTKLVTSVKLPDYNSGKVEMQYFHENASFATAVGMKPSPVVEFSGTAGAQGLAFGAEAGFDTATGKFTKYSAAIGVTKPDYHAAIVLADKGDTVKVSGVYHLDDKQKSSVVAELTRRLSTNENTLTVGGLYKVDPETAVKARLNNTGKLAALLQHEVKPKSVLTISGEFDTKALDRPPKFGLALALRP.

This sequence belongs to the eukaryotic mitochondrial porin (TC 1.B.8.1) family.

It localises to the mitochondrion outer membrane. In terms of biological role, forms a channel through the mitochondrial outer membrane that allows diffusion of small hydrophilic molecules. The channel adopts an open conformation at low or zero membrane potential and a closed conformation at potentials above 30-40 mV. The open state has a weak anion selectivity whereas the closed state is cation-selective. In Oryza sativa subsp. japonica (Rice), this protein is Mitochondrial outer membrane protein porin 5 (VDAC5).